The primary structure comprises 67 residues: Protein SlyX homolog (67 aa).

This sequence belongs to the SlyX family.

This is Protein SlyX homolog from Thiobacillus denitrificans (strain ATCC 25259 / T1).